Here is a 295-residue protein sequence, read N- to C-terminus: Acetylglutamate kinase (295 aa).

Residues 66–67, arginine 88, and asparagine 193 contribute to the substrate site; that span reads GG.

Belongs to the acetylglutamate kinase family. ArgB subfamily.

The protein localises to the cytoplasm. The catalysed reaction is N-acetyl-L-glutamate + ATP = N-acetyl-L-glutamyl 5-phosphate + ADP. Its pathway is amino-acid biosynthesis; L-arginine biosynthesis; N(2)-acetyl-L-ornithine from L-glutamate: step 2/4. In terms of biological role, catalyzes the ATP-dependent phosphorylation of N-acetyl-L-glutamate. In Sinorhizobium medicae (strain WSM419) (Ensifer medicae), this protein is Acetylglutamate kinase.